We begin with the raw amino-acid sequence, 262 residues long: Adenosylcobinamide-GDP ribazoletransferase (262 aa).

The next 6 helical transmembrane spans lie at 43–63 (YFGLVGLLVGLLSAIIFWLTQ), 66–86 (LPAGVSVLLSMLTGILLTGGF), 120–140 (GALALIMVLLLKWQLLVELAL), 146–166 (AGSAMIVAHTVSRVVAASLIF), 191–211 (LFILIASGVLVLLVLKGIAAL), and 242–262 (AAQQICEIVCYFVLLVVGGIL).

This sequence belongs to the CobS family. It depends on Mg(2+) as a cofactor.

The protein localises to the cell inner membrane. The enzyme catalyses alpha-ribazole + adenosylcob(III)inamide-GDP = adenosylcob(III)alamin + GMP + H(+). It catalyses the reaction alpha-ribazole 5'-phosphate + adenosylcob(III)inamide-GDP = adenosylcob(III)alamin 5'-phosphate + GMP + H(+). Its pathway is cofactor biosynthesis; adenosylcobalamin biosynthesis; adenosylcobalamin from cob(II)yrinate a,c-diamide: step 7/7. Its function is as follows. Joins adenosylcobinamide-GDP and alpha-ribazole to generate adenosylcobalamin (Ado-cobalamin). Also synthesizes adenosylcobalamin 5'-phosphate from adenosylcobinamide-GDP and alpha-ribazole 5'-phosphate. The polypeptide is Adenosylcobinamide-GDP ribazoletransferase (Shewanella oneidensis (strain ATCC 700550 / JCM 31522 / CIP 106686 / LMG 19005 / NCIMB 14063 / MR-1)).